A 49-amino-acid polypeptide reads, in one-letter code: uncharacterized protein (49 aa).

Positions 1-22 (MIQKPILLSSFLFLYIRALLHS) are cleaved as a signal peptide.

This is an uncharacterized protein from Saccharomyces cerevisiae (strain ATCC 204508 / S288c) (Baker's yeast).